Reading from the N-terminus, the 906-residue chain is ATP-dependent DNA helicase PIF1 (906 aa).

Disordered stretches follow at residues 77–146 (DSEI…SSTF) and 229–297 (LEGS…PFKV). Positions 78–87 (SEIKESDDLS) are enriched in basic and acidic residues. The segment covering 88–119 (KGQSHVYNGSPVTKNSILQIEKQQIQKSPRPT) has biased composition (polar residues). The segment covering 120 to 132 (ETNKRMQIRKDPD) has biased composition (basic and acidic residues). Residues 234–261 (NKVQADNASPFRITSSFSSPSQIQNQGV) are compositionally biased toward polar residues. Low complexity predominate over residues 273–291 (QNVSSASQSSSPPMTVSQV). 390–397 (GSAGTGKS) is a binding site for ATP. The DNA-binding element occupies 840 to 859 (QAYVALSRAVSRAGLQVLNF).

This sequence belongs to the helicase family. PIF1 subfamily. Monomer. Interacts with telomerase. Mg(2+) is required as a cofactor.

It localises to the nucleus. The protein localises to the mitochondrion. It catalyses the reaction Couples ATP hydrolysis with the unwinding of duplex DNA at the replication fork by translocating in the 5'-3' direction. This creates two antiparallel DNA single strands (ssDNA). The leading ssDNA polymer is the template for DNA polymerase III holoenzyme which synthesizes a continuous strand.. The enzyme catalyses ATP + H2O = ADP + phosphate + H(+). In terms of biological role, DNA-dependent ATPase and 5'-3' DNA helicase required for the maintenance of both mitochondrial and nuclear genome stability. Efficiently unwinds G-quadruplex (G4) DNA structures and forked RNA-DNA hybrids. Resolves G4 structures, preventing replication pausing and double-strand breaks (DSBs) at G4 motifs. Involved in the maintenance of telomeric DNA. Inhibits telomere elongation, de novo telomere formation and telomere addition to DSBs via catalytic inhibition of telomerase. Reduces the processivity of telomerase by displacing active telomerase from DNA ends. Releases telomerase by unwinding the short telomerase RNA/telomeric DNA hybrid that is the intermediate in the telomerase reaction. Involved in the maintenance of ribosomal (rDNA). Required for efficient fork arrest at the replication fork barrier within rDNA. Involved in the maintenance of mitochondrial (mtDNA). Required to maintain mtDNA under conditions that introduce dsDNA breaks in mtDNA, either preventing or repairing dsDNA breaks. May inhibit replication progression to allow time for repair. May have a general role in chromosomal replication by affecting Okazaki fragment maturation. May have a role in conjunction with DNA2 helicase/nuclease in 5'-flap extension during Okazaki fragment processing. The polypeptide is ATP-dependent DNA helicase PIF1 (Candida albicans (strain SC5314 / ATCC MYA-2876) (Yeast)).